A 187-amino-acid chain; its full sequence is UPF0301 protein YqgE (187 aa).

This sequence belongs to the UPF0301 (AlgH) family.

This Escherichia coli O127:H6 (strain E2348/69 / EPEC) protein is UPF0301 protein YqgE.